The chain runs to 214 residues: MKFFLDTANVEAIRAINELGVVDGVTTNPSIISREGRDFETVIKEICEIVDGPISAEVTGLTAEEMIAEARSIAKWHDNVVVKIPMTTEGLKATNVLSQEGIKTNVTLIFTVSQGLMAMKAGATYISPFIGRLEDIGADPYQLISDLRGIIDLYGFQAEIIAASIRTAAHVEAVAQLGAHIATIPDPLFAKMTEHPLTTNGLKTFMEDWASFKQ.

The active-site Schiff-base intermediate with substrate is the Lys83.

This sequence belongs to the transaldolase family. Type 3B subfamily.

Its subcellular location is the cytoplasm. The enzyme catalyses D-sedoheptulose 7-phosphate + D-glyceraldehyde 3-phosphate = D-erythrose 4-phosphate + beta-D-fructose 6-phosphate. The protein operates within carbohydrate degradation; pentose phosphate pathway; D-glyceraldehyde 3-phosphate and beta-D-fructose 6-phosphate from D-ribose 5-phosphate and D-xylulose 5-phosphate (non-oxidative stage): step 2/3. Functionally, transaldolase is important for the balance of metabolites in the pentose-phosphate pathway. The polypeptide is Probable transaldolase (Streptococcus equi subsp. zooepidemicus (strain H70)).